The following is a 501-amino-acid chain: Envelope glycoprotein C homolog (501 aa).

Residues 1–27 form the signal peptide; it reads MLTPRVLRALGWTGLFFLLLSPSNVLG. Residues 28–465 lie on the Virion surface side of the membrane; sequence ASLSRDLETP…DATPSARGTP (438 aa). An N-linked (GlcNAc...) asparagine; by host glycan is attached at asparagine 46. The segment at 53–87 is disordered; that stretch reads PLTEVPHAPSTESVSTNSESTNEHTITETTGKNAY. The segment covering 62 to 72 has biased composition (low complexity); sequence STESVSTNSES. Asparagine 91, asparagine 100, asparagine 120, asparagine 212, asparagine 354, asparagine 400, and asparagine 429 each carry an N-linked (GlcNAc...) asparagine; by host glycan. Residues 258 to 356 form the Ig-like domain; the sequence is PASVDVLAPP…GDMISTTNAT (99 aa). The helical transmembrane segment at 466 to 492 threads the bilayer; the sequence is MVITVTAVLGLAVILGMGIIMTALCLY. Over 493 to 501 the chain is Cytoplasmic; it reads NSTRKNIRL.

The protein belongs to the herpesviridae glycoprotein C family.

It localises to the secreted. Its subcellular location is the host cell membrane. May play an immunoevasive role in the pathogenesis of Marek's disease. It is a candidate for causing the early-stage immunosuppression that occurs after MDHV infection. The chain is Envelope glycoprotein C homolog (gC) from Gallus gallus (Chicken).